The chain runs to 668 residues: Nuclear pore complex protein Nup75 (668 aa).

The protein belongs to the nucleoporin Nup85 family. As to quaternary structure, component of the nuclear pore complex (NPC). Component of the NPC Nup107-160 subcomplex.

It localises to the nucleus. The protein resides in the nuclear pore complex. The protein localises to the nucleus membrane. Functionally, component of the nuclear pore complex (NPC) that seems to be required for NPC assembly and maintenance. Required for nuclear import of phosphorylated Mad via importin msk. Has no role in classical nuclear localization signal (cNLS)-dependent nuclear import via importin-beta. Facilitates the interaction between Nup93 and sec13 with msk. This Drosophila melanogaster (Fruit fly) protein is Nuclear pore complex protein Nup75.